We begin with the raw amino-acid sequence, 485 residues long: Acetyl-coenzyme A carboxylase carboxyl transferase subunit beta, chloroplastic (485 aa).

Residues 218–485 enclose the CoA carboxyltransferase N-terminal domain; it reads LWIQCDNCYA…FFPLNKNEIK (268 aa). The Zn(2+) site is built by cysteine 222, cysteine 225, cysteine 241, and cysteine 244. The C4-type zinc-finger motif lies at 222–244; that stretch reads CDNCYALIYKKALKFKMNVCEQC.

This sequence belongs to the AccD/PCCB family. Acetyl-CoA carboxylase is a heterohexamer composed of biotin carboxyl carrier protein, biotin carboxylase and 2 subunits each of ACCase subunit alpha and ACCase plastid-coded subunit beta (accD). It depends on Zn(2+) as a cofactor.

It localises to the plastid. Its subcellular location is the chloroplast stroma. The catalysed reaction is N(6)-carboxybiotinyl-L-lysyl-[protein] + acetyl-CoA = N(6)-biotinyl-L-lysyl-[protein] + malonyl-CoA. It participates in lipid metabolism; malonyl-CoA biosynthesis; malonyl-CoA from acetyl-CoA: step 1/1. Its function is as follows. Component of the acetyl coenzyme A carboxylase (ACC) complex. Biotin carboxylase (BC) catalyzes the carboxylation of biotin on its carrier protein (BCCP) and then the CO(2) group is transferred by the transcarboxylase to acetyl-CoA to form malonyl-CoA. This is Acetyl-coenzyme A carboxylase carboxyl transferase subunit beta, chloroplastic from Aethionema cordifolium (Lebanon stonecress).